Consider the following 94-residue polypeptide: DNA gyrase subunit A (94 aa).

The region spanning 35 to 94 (LPDVRDGLKPVHRRILYGLNEQGMTPDKPYKKSARIVGDVMGKYHPHGDSSIYEAMVRMA) is the Topo IIA-type catalytic domain.

The protein belongs to the type II topoisomerase GyrA/ParC subunit family. In terms of assembly, heterotetramer, composed of two GyrA and two GyrB chains. In the heterotetramer, GyrA contains the active site tyrosine that forms a transient covalent intermediate with DNA, while GyrB binds cofactors and catalyzes ATP hydrolysis.

The protein resides in the cytoplasm. The catalysed reaction is ATP-dependent breakage, passage and rejoining of double-stranded DNA.. In terms of biological role, a type II topoisomerase that negatively supercoils closed circular double-stranded (ds) DNA in an ATP-dependent manner to modulate DNA topology and maintain chromosomes in an underwound state. Negative supercoiling favors strand separation, and DNA replication, transcription, recombination and repair, all of which involve strand separation. Also able to catalyze the interconversion of other topological isomers of dsDNA rings, including catenanes and knotted rings. Type II topoisomerases break and join 2 DNA strands simultaneously in an ATP-dependent manner. The sequence is that of DNA gyrase subunit A from Staphylococcus epidermidis.